Here is a 248-residue protein sequence, read N- to C-terminus: PF03932 family protein CutC (248 aa).

Belongs to the CutC family. Homodimer.

Its subcellular location is the cytoplasm. This is PF03932 family protein CutC from Salmonella paratyphi B (strain ATCC BAA-1250 / SPB7).